A 309-amino-acid chain; its full sequence is Zinc transporter ZIP2 (309 aa).

Residues 1–8 (MEVLLGVK) lie on the Extracellular side of the membrane. Residues 9-29 (IGCLLALLVLTLGCGLTPIYV) form a helical membrane-spanning segment. Over 30 to 43 (KWFQMDAATGHHHR) the chain is Cytoplasmic. A helical membrane pass occupies residues 44–64 (VLSLLGCTSAGVFLGAGLMHM). Residues 65–103 (TAEALEGIESEIQKFVEQNSTGSKGNSSRDAASSYVEYP) lie on the Extracellular side of the membrane. Residues 104-124 (YGELVISLGFFFVFLLESLAL) form a helical membrane-spanning segment. Topologically, residues 125-164 (QCCHGAAGGSTVQEEEWGGTHAFGFHKHPAVPSPSRGPLR) are cytoplasmic. Residues 165 to 185 (ALVLLLSLSFHSVFEGLAVGL) form a helical membrane-spanning segment. 2 residues coordinate Zn(2+): histidine 175 and glutamate 179. The Extracellular segment spans residues 186-191 (QATVAA). A helical transmembrane segment spans residues 192 to 212 (TIQLCVAVLAHKGLVVFSVGL). Zn(2+) is bound at residue histidine 202. Residues 213–225 (RLGKIGTGPRWAT) lie on the Cytoplasmic side of the membrane. The chain crosses the membrane as a helical span at residues 226-246 (FCILSLALMSPVGLALGLTVA). At 247 to 258 (GGASGQTQGLAQ) the chain is on the extracellular side. A helical membrane pass occupies residues 259–279 (AVLEGIAAGTFLYVTFLEILP). A Zn(2+)-binding site is contributed by glutamate 276. Over 280-288 (RELACPEAP) the chain is Cytoplasmic. A helical transmembrane segment spans residues 289-309 (LAKYSCVAAGFAFMALIALWA).

Belongs to the ZIP transporter (TC 2.A.5) family. In terms of tissue distribution, high expression in the liver, skin and ovary.

It is found in the cell membrane. The enzyme catalyses Zn(2+)(in) = Zn(2+)(out). The catalysed reaction is Cd(2+)(in) = Cd(2+)(out). Functionally, transporter for the divalent cation Zn(2+). Mediates the influx of Zn(2+) into cells from extracellular space. The Zn(2+) uniporter activity is independent of H(+)-driving force, but is modulated by extracellular pH and membrane potential. Transports also other divalent cations Zn(2+), Cd2(+), Cu2(+), Co2(+) in the order of decreasing affinity, respectively. In the skin, aids in the differentiation of keratinocytes in the epidermis. In Mus musculus (Mouse), this protein is Zinc transporter ZIP2 (Slc39a2).